The chain runs to 417 residues: UDP-N-acetylglucosamine 1-carboxyvinyltransferase (417 aa).

Residue 22–23 (KN) participates in phosphoenolpyruvate binding. A UDP-N-acetyl-alpha-D-glucosamine-binding site is contributed by Arg-92. The active-site Proton donor is Cys-116. The residue at position 116 (Cys-116) is a 2-(S-cysteinyl)pyruvic acid O-phosphothioketal. UDP-N-acetyl-alpha-D-glucosamine is bound by residues Asp-304 and Ile-326.

The protein belongs to the EPSP synthase family. MurA subfamily.

Its subcellular location is the cytoplasm. The catalysed reaction is phosphoenolpyruvate + UDP-N-acetyl-alpha-D-glucosamine = UDP-N-acetyl-3-O-(1-carboxyvinyl)-alpha-D-glucosamine + phosphate. It functions in the pathway cell wall biogenesis; peptidoglycan biosynthesis. Functionally, cell wall formation. Adds enolpyruvyl to UDP-N-acetylglucosamine. This Geotalea uraniireducens (strain Rf4) (Geobacter uraniireducens) protein is UDP-N-acetylglucosamine 1-carboxyvinyltransferase.